Here is a 332-residue protein sequence, read N- to C-terminus: Melanocortin receptor 4 (332 aa).

Residues 1-43 (MNSTHHHGMYTSLHLWNRSSYGLHGNASESLGKGHPDGGCYEQ) are Extracellular-facing. 3 N-linked (GlcNAc...) asparagine glycosylation sites follow: Asn-2, Asn-17, and Asn-26. Intrachain disulfides connect Cys-40–Cys-279 and Cys-271–Cys-277. The helical transmembrane segment at 44–69 (LFVSPEVFVTLGVISLLENILVIVAI) threads the bilayer. Topologically, residues 70–81 (AKNKNLHSPMYF) are cytoplasmic. The chain crosses the membrane as a helical span at residues 82-106 (FICSLAVADMLVSVSNGSETIVITL). Glu-100 serves as a coordination point for Ca(2+). Over 107-123 (LNSTDTDAQSFTVNIDN) the chain is Extracellular. The N-linked (GlcNAc...) asparagine glycan is linked to Asn-108. Positions 122 and 126 each coordinate Ca(2+). The helical transmembrane segment at 124 to 145 (VIDSVICSSLLASICSLLSIAV) threads the bilayer. Over 146–165 (DRYFTIFYALQYHNIMTVRR) the chain is Cytoplasmic. Residues 166 to 186 (VGIIISCIWAACTVSGVLFII) form a helical membrane-spanning segment. Over 187–191 (YSDSS) the chain is Extracellular. Residues 192-215 (AVIICLISMFFTMLVLMASLYVHM) form a helical membrane-spanning segment. At 216-248 (FLMARLHIKRIAVLPGTGTIRQGTNMKGAITLT) the chain is on the cytoplasmic side. A helical membrane pass occupies residues 249-271 (ILIGVFVVCWAPFFLHLLFYISC). At 272–280 (PQNPYCVCF) the chain is on the extracellular side. The chain crosses the membrane as a helical span at residues 281–304 (MSHFNLYLILIMCNAVIDPLIYAL). Residues 305-332 (RSQELRKTFKEIICFYPLGGICELSSRY) lie on the Cytoplasmic side of the membrane. Cys-318 carries the S-palmitoyl cysteine lipid modification.

Belongs to the G-protein coupled receptor 1 family. Homodimer; disulfide-linked, also forms higher order oligomers. Interacts with GNAS. Interacts with ATRNL1. Interacts with MGRN1; this interaction competes with GNAS-binding and thus inhibits agonist-induced cAMP production. Interacts with MRAP and MRAP2; these associated factors increase ligand-sensitivity and generation of cAMP.

The protein resides in the cell membrane. Its function is as follows. Hormone receptor that acts as a key component of the leptin-melanocortin pathway at the intersection of homeostatic maintenance of energetic state. Plays a role in regulating food intake: activation by a stimulating hormone such as anorexigenic alpha-melanocyte stimulating hormone (alpha-MSH) inhibits appetite, whereas binding to a natural antagonist like Agouti-related protein/AGRP promotes appetite. G-protein-coupled receptor that activates conventional Galphas signaling leading to induction of anorexogenic signaling in the hypothalamus to result in negative energy balance. Regulates the firing activity of neurons from the hypothalamus by alpha-MSH and AGRP independently of Galphas signaling by ligand-induced coupling of closure of inwardly rectifying potassium channel KCNJ13. In intestinal epithelial cells, plays a role in the inhibition of hepatic glucose production via nesfatin-1/NUCB2 leading to increased cyclic adenosine monophosphate (cAMP) levels and glucagon-like peptide 1 (GLP-1) secretion in the intestinal epithelium. The protein is Melanocortin receptor 4 (Mc4r) of Mus musculus (Mouse).